The chain runs to 1203 residues: ATP-dependent helicase/nuclease subunit A (1203 aa).

Residues 4–472 enclose the UvrD-like helicase ATP-binding domain; that stretch reads VKLTPEQNEA…IRLKENFRSR (469 aa). Residue 25 to 32 coordinates ATP; sequence ASAGSGKT. A UvrD-like helicase C-terminal domain is found at 503–785; sequence VQGNITDYPV…RVMTFHKSKG (283 aa).

Belongs to the helicase family. AddA subfamily. Heterodimer of AddA and AddB/RexB. Mg(2+) serves as cofactor.

It carries out the reaction Couples ATP hydrolysis with the unwinding of duplex DNA by translocating in the 3'-5' direction.. It catalyses the reaction ATP + H2O = ADP + phosphate + H(+). Functionally, the heterodimer acts as both an ATP-dependent DNA helicase and an ATP-dependent, dual-direction single-stranded exonuclease. Recognizes the chi site generating a DNA molecule suitable for the initiation of homologous recombination. The AddA nuclease domain is required for chi fragment generation; this subunit has the helicase and 3' -&gt; 5' nuclease activities. This Lactococcus lactis subsp. lactis (strain IL1403) (Streptococcus lactis) protein is ATP-dependent helicase/nuclease subunit A.